The sequence spans 368 residues: Seven-bladed beta-propeller protein MSMEG_5308 (368 aa).

In terms of assembly, interacts with MmpL3 and TtfA.

The protein resides in the cell septum. It is found in the cell tip. Stabilizes the MmpL3/TtfA trehalose monomycolate (TMM) transport complex under stress conditions. The polypeptide is Seven-bladed beta-propeller protein MSMEG_5308 (Mycolicibacterium smegmatis (strain ATCC 700084 / mc(2)155) (Mycobacterium smegmatis)).